Here is a 92-residue protein sequence, read N- to C-terminus: MLCAVYKSSRKADTYLFVNKRDCFDDVPQALLDMFGVPQLVMVFPIAKRESLGIADIQKVRAALEEKGFYLQIPPPQVNLLAEHRVSLGIKD.

Residues 1 to 85 enclose the YcgL domain; sequence MLCAVYKSSR…PQVNLLAEHR (85 aa).

This chain is YcgL domain-containing protein Shewmr7_2249, found in Shewanella sp. (strain MR-7).